The following is a 68-amino-acid chain: MNSKAIISVFLIMLVVVSCTQATYETEDDDEPGPRHSEKRSCARGCGGDSDCPCPGWHCPSPGGRCEP.

Positions 1–22 are cleaved as a signal peptide; that stretch reads MNSKAIISVFLIMLVVVSCTQA. Positions 23 to 40 are excised as a propeptide; that stretch reads TYETEDDDEPGPRHSEKR. Residues 24 to 50 form a disordered region; the sequence is YETEDDDEPGPRHSEKRSCARGCGGDS. A compositionally biased stretch (basic and acidic residues) spans 32 to 41; it reads PGPRHSEKRS. 3 disulfide bridges follow: cysteine 42–cysteine 54, cysteine 46–cysteine 59, and cysteine 52–cysteine 66.

Functionally, stable protein with probable toxin activity. Does not show activity on all channels tested. Shows no hemolytic activity on rat erythrocytes. In Aulactinia veratra (Green snakelock anemone), this protein is U-actitoxin-Avt1.